The following is a 172-amino-acid chain: Stellate orphon protein at 12D (172 aa).

Belongs to the casein kinase 2 subunit beta family. Interacts in vitro with the casein kinase 2 alpha subunit (CkII-alpha). The relevance of such interaction is however unclear in vivo. Probably not expressed in wild-type flies. In males lacking the Y chromosome, it is testis-specific and constitutes the main component of star-shaped crystals.

Its function is as follows. Unknown. In males lacking the Y chromosome, its strong overexpression leads to the appearance of proteinaceous star-shaped crystals in the primary spermatocytes causing meiotic drive, possibly by interfering with normal casein kinase 2 activity. The sequence is that of Stellate orphon protein at 12D (Ste12DOR) from Drosophila melanogaster (Fruit fly).